A 191-amino-acid chain; its full sequence is Fe/S biogenesis protein NfuA (191 aa).

[4Fe-4S] cluster-binding residues include Cys149 and Cys152.

It belongs to the NfuA family. As to quaternary structure, homodimer. [4Fe-4S] cluster serves as cofactor.

In terms of biological role, involved in iron-sulfur cluster biogenesis. Binds a 4Fe-4S cluster, can transfer this cluster to apoproteins, and thereby intervenes in the maturation of Fe/S proteins. Could also act as a scaffold/chaperone for damaged Fe/S proteins. The sequence is that of Fe/S biogenesis protein NfuA from Pectobacterium carotovorum subsp. carotovorum (strain PC1).